Here is a 173-residue protein sequence, read N- to C-terminus: MAIILGIDPGSRVTGYGVIRQVGRQLSYLGSGCIRTKVDDLPSRLKLIYAGVTEIITQFQPDYFAIEQVFMAKNADSALKLGQARGVAIVAAVNQELPVFEYAARQVKQTVVGMGSAEKSQVQHMVRTLLKLPANPQADAADALAIAITHCHVSQNAMQMSESRLNLTRGRLR.

Residues Asp-8, Glu-67, and Asp-139 contribute to the active site. Residues Asp-8, Glu-67, and Asp-139 each contribute to the Mg(2+) site.

The protein belongs to the RuvC family. As to quaternary structure, homodimer which binds Holliday junction (HJ) DNA. The HJ becomes 2-fold symmetrical on binding to RuvC with unstacked arms; it has a different conformation from HJ DNA in complex with RuvA. In the full resolvosome a probable DNA-RuvA(4)-RuvB(12)-RuvC(2) complex forms which resolves the HJ. It depends on Mg(2+) as a cofactor.

It localises to the cytoplasm. It carries out the reaction Endonucleolytic cleavage at a junction such as a reciprocal single-stranded crossover between two homologous DNA duplexes (Holliday junction).. The RuvA-RuvB-RuvC complex processes Holliday junction (HJ) DNA during genetic recombination and DNA repair. Endonuclease that resolves HJ intermediates. Cleaves cruciform DNA by making single-stranded nicks across the HJ at symmetrical positions within the homologous arms, yielding a 5'-phosphate and a 3'-hydroxyl group; requires a central core of homology in the junction. The consensus cleavage sequence is 5'-(A/T)TT(C/G)-3'. Cleavage occurs on the 3'-side of the TT dinucleotide at the point of strand exchange. HJ branch migration catalyzed by RuvA-RuvB allows RuvC to scan DNA until it finds its consensus sequence, where it cleaves and resolves the cruciform DNA. This Shigella flexneri serotype 5b (strain 8401) protein is Crossover junction endodeoxyribonuclease RuvC.